The sequence spans 212 residues: Large ribosomal subunit protein uL3 (212 aa).

The tract at residues 117-142 (TSKGKGFQGNIKRHNQSRGPMTHGSR) is disordered.

This sequence belongs to the universal ribosomal protein uL3 family. As to quaternary structure, part of the 50S ribosomal subunit. Forms a cluster with proteins L14 and L19.

In terms of biological role, one of the primary rRNA binding proteins, it binds directly near the 3'-end of the 23S rRNA, where it nucleates assembly of the 50S subunit. The chain is Large ribosomal subunit protein uL3 from Acholeplasma laidlawii (strain PG-8A).